The chain runs to 231 residues: TATA-box-binding protein (231 aa).

2 consecutive repeat copies span residues 58 to 134 and 148 to 225.

The protein belongs to the TBP family. Belongs to the TFIID complex together with the TBP-associated factors (TAFs). Binds DNA as monomer.

It localises to the nucleus. In terms of biological role, general transcription factor that functions at the core of the DNA-binding multiprotein factor TFIID. Binding of TFIID to the TATA box is the initial transcriptional step of the pre-initiation complex (PIC), playing a role in the activation of eukaryotic genes transcribed by RNA polymerase II. This Schizosaccharomyces pombe (strain 972 / ATCC 24843) (Fission yeast) protein is TATA-box-binding protein (tbp1).